The sequence spans 357 residues: NmrA-like family domain-containing oxidoreductase notA' (357 aa).

Residues 13–18 (GATGAQ), 39–43 (RKPES), 60–61 (DG), 81–83 (TNS), Lys-140, and 164–167 (YMDV) contribute to the NADP(+) site.

Belongs to the NmrA-type oxidoreductase family.

In terms of biological role, nmrA-like family domain-containing oxidoreductase; part of the gene cluster that mediates the biosynthesis of notoamide, a fungal indole alkaloid that belongs to a family of natural products containing a characteristic bicyclo[2.2.2]diazaoctane core. The first step of notoamide biosynthesis involves coupling of L-proline and L-tryptophan by the bimodular NRPS notE', to produce cyclo-L-tryptophan-L-proline called brevianamide F. The reverse prenyltransferase notF' then acts as a deoxybrevianamide E synthase and converts brevianamide F to deoxybrevianamide E via reverse prenylation at C-2 of the indole ring leading to the bicyclo[2.2.2]diazaoctane core. Deoxybrevianamide E is further hydroxylated at C-6 of the indole ring, likely catalyzed by the cytochrome P450 monooxygenase notG', to yield 6-hydroxy-deoxybrevianamide E. 6-hydroxy-deoxybrevianamide E is a specific substrate of the prenyltransferase notC' for normal prenylation at C-7 to produce 6-hydroxy-7-prenyl-deoxybrevianamide, also called notoamide S. As the proposed pivotal branching point in notoamide biosynthesis, notoamide S can be diverted to notoamide E through an oxidative pyran ring closure putatively catalyzed by either notH' cytochrome P450 monooxygenase or the notD' FAD-linked oxidoreductase. This step would be followed by an indole 2,3-epoxidation-initiated pinacol-like rearrangement catalyzed by the notB' FAD-dependent monooxygenase leading to the formation of notoamide C and notoamide D. On the other hand notoamide S is converted to notoamide T by notH' (or notD'), a bifunctional oxidase that also functions as the intramolecular Diels-Alderase responsible for generation of (-)-notoamide T. To generate antipodal (+)-notoaminide T, notH (or notD) in Aspergillus strain MF297-2 is expected to catalyze a Diels-Alder reaction leading to the opposite stereochemistry. The remaining oxidoreductase notD' (or notH') likely catalyzes the oxidative pyran ring formation to yield (-)-stephacidin A. The FAD-dependent monooxygenase notI' is highly similar to notB' and is predicted to catalyze a similar conversion from (-)-stephacidin A to (+)-notoamide B via the 2,3-epoxidation of (-)-stephacidin A followed by a pinacol-type rearrangement. Finally, it remains unclear which enzyme could be responsible for the final hydroxylation steps leading to notoamide A and sclerotiamide. This Aspergillus versicolor protein is NmrA-like family domain-containing oxidoreductase notA'.